The following is a 331-amino-acid chain: Malate dehydrogenase (331 aa).

NAD(+) is bound at residue 14–20; sequence GAAGSIG. Residues R95 and R101 each contribute to the substrate site. NAD(+)-binding positions include N108, Q115, and 132 to 134; that span reads VGN. N134 and R165 together coordinate substrate. The Proton acceptor role is filled by H190.

Belongs to the LDH/MDH superfamily. MDH type 2 family.

The catalysed reaction is (S)-malate + NAD(+) = oxaloacetate + NADH + H(+). Catalyzes the reversible oxidation of malate to oxaloacetate. The chain is Malate dehydrogenase from Rhodococcus jostii (strain RHA1).